Consider the following 244-residue polypeptide: Nicotinamidase 1 (244 aa).

The protein belongs to the isochorismatase family. In terms of tissue distribution, expressed in roots and stems, and at lower levels in flowers, siliques and leaves.

It carries out the reaction nicotinamide + H2O = nicotinate + NH4(+). It functions in the pathway cofactor biosynthesis; nicotinate biosynthesis; nicotinate from nicotinamide: step 1/1. Functionally, catalyzes the deamidation of nicotinamide, an early step in the NAD(+) salvage pathway. Prevents the accumulation of intracellular nicotinamide, a known inhibitor of poly(ADP-ribose) polymerases (PARP enzymes). In Arabidopsis thaliana (Mouse-ear cress), this protein is Nicotinamidase 1.